The primary structure comprises 209 residues: uncharacterized protein (209 aa).

A signal peptide spans 1–19 (MGYFPYLAVFVCLLASGDA). N-linked (GlcNAc...) asparagine glycosylation is found at Asn-41 and Asn-109.

In terms of tissue distribution, component of the acid-soluble organic matrix of prismatic shell layers (at protein level).

The protein localises to the secreted. This is an uncharacterized protein from Haliotis asinina (Donkey's ear abalone).